Reading from the N-terminus, the 320-residue chain is Aspartate carbamoyltransferase catalytic subunit (320 aa).

Positions 68 and 69 each coordinate carbamoyl phosphate. Lys96 provides a ligand contact to L-aspartate. Carbamoyl phosphate contacts are provided by Arg118, His148, and Gln151. Arg181 and Arg236 together coordinate L-aspartate. 2 residues coordinate carbamoyl phosphate: Gly277 and Pro278.

This sequence belongs to the aspartate/ornithine carbamoyltransferase superfamily. ATCase family. In terms of assembly, heterododecamer (2C3:3R2) of six catalytic PyrB chains organized as two trimers (C3), and six regulatory PyrI chains organized as three dimers (R2).

It catalyses the reaction carbamoyl phosphate + L-aspartate = N-carbamoyl-L-aspartate + phosphate + H(+). It functions in the pathway pyrimidine metabolism; UMP biosynthesis via de novo pathway; (S)-dihydroorotate from bicarbonate: step 2/3. Its function is as follows. Catalyzes the condensation of carbamoyl phosphate and aspartate to form carbamoyl aspartate and inorganic phosphate, the committed step in the de novo pyrimidine nucleotide biosynthesis pathway. The protein is Aspartate carbamoyltransferase catalytic subunit of Variovorax paradoxus (strain S110).